The primary structure comprises 1216 residues: Protein WWC3 (1216 aa).

Residues 1 to 63 (MPWLSGGRRR…RESAELPLPA (63 aa)) are disordered. The segment covering 21 to 51 (EPPPSAQPQREPPPAPPAAVPTPPAPSAPPP) has biased composition (pro residues). 2 consecutive WW domains span residues 59–92 (LPLPAGWEEARDYDGRVFYIDHNTRQTSWIDPRD) and 106–139 (DELPLGWETVYDKQIGVYYMDHINKLTQIEDPRE). 2 coiled-coil regions span residues 164-250 (KEIY…TLQE) and 354-468 (DRVR…EATR). 3 disordered regions span residues 487–508 (VSSGSSRGSLASSRGSLASSRG), 546–612 (GRDA…ADSC), and 634–668 (DLPGMAALQPHGVPGDGEGPHERGPPPASAPVGGT). Residues 570–598 (PQSLASLSSRSSLSSLSPPSSPLDTPFLP) show a composition bias toward low complexity. The 126-residue stretch at 722–847 (SNGDPQIHVG…SLSEMQLRWH (126 aa)) folds into the C2 domain. Residues 885 to 936 (DAVTVLLARTTAQLQAVERELAEERAKLEYTEEEVLEMERKEEQAEAISERS) are a coiled coil. The interaction with PRKCZ stretch occupies residues 1060–1079 (SPFVRNTLERRTLRYKQSCR). A coiled-coil region spans residues 1091–1160 (LDLELDLQAS…RQTRQTKLDY (70 aa)).

It belongs to the WWC family. As to quaternary structure, forms homodimers and heterodimers with WWC1 and WWC2. Interacts with DLC1 and PRKCZ. Interacts (via WW domains) with LATS1 and LATS2.

The protein localises to the cytoplasm. Its subcellular location is the cytosol. In terms of biological role, regulator of the Hippo signaling pathway, also known as the Salvador-Warts-Hippo (SWH) pathway. Enhances phosphorylation of LATS1 and YAP1 and negatively regulates cell proliferation and organ growth due to a suppression of the transcriptional activity of YAP1, the major effector of the Hippo pathway. This chain is Protein WWC3, found in Homo sapiens (Human).